We begin with the raw amino-acid sequence, 230 residues long: Urease accessory protein UreF (230 aa).

The protein belongs to the UreF family. As to quaternary structure, ureD, UreF and UreG form a complex that acts as a GTP-hydrolysis-dependent molecular chaperone, activating the urease apoprotein by helping to assemble the nickel containing metallocenter of UreC. The UreE protein probably delivers the nickel.

The protein resides in the cytoplasm. Its function is as follows. Required for maturation of urease via the functional incorporation of the urease nickel metallocenter. This Polynucleobacter asymbioticus (strain DSM 18221 / CIP 109841 / QLW-P1DMWA-1) (Polynucleobacter necessarius subsp. asymbioticus) protein is Urease accessory protein UreF.